The sequence spans 1041 residues: Leucine-rich repeat receptor-like protein kinase TDR (1041 aa).

The N-terminal stretch at 1–29 (MKKKNISPSLVLHPLLLLLLPFFAFNSLA) is a signal peptide. Residues 30–652 (LKFSPQLLSL…HHKEERPKKT (623 aa)) lie on the Extracellular side of the membrane. The cysteines at positions 69 and 76 are disulfide-linked. N-linked (GlcNAc...) asparagine glycans are attached at residues Asn-78, Asn-92, and Asn-111. LRR repeat units follow at residues 80-104 (TAQV…IRYL), 105-128 (SSLL…IFDL), 130-152 (KLTT…ISKL), 154-176 (FLKV…VSRL), 177-199 (RFLE…AYGG), 200-224 (LQRL…LGLL), 225-248 (TELQ…FALL), 250-272 (NLKY…LGNL), 273-296 (SNLE…YSNL), 297-319 (KSLK…GFST), 321-344 (KNLT…IGEL), 345-368 (PELT…LGSN), 369-392 (GKLE…LCHG), 394-416 (KLYK…LTRC), 418-439 (SLWR…GFGS), 440-464 (LRNL…FATA), 466-488 (VLQY…IWKA), 511-535 (CKSF…IGHC), 536-558 (EKLL…EIST), 559-583 (LPSI…FGSS), and 585-607 (TITT…SFAH). Residues 186–188 (GSY) are CLE peptide binding. The segment at 233–235 (GYN) is CLE peptide binding. 2 N-linked (GlcNAc...) asparagine glycosylation sites follow: Asn-258 and Asn-271. A CLE peptide binding region spans residues 303–307 (DFSSN). 3 N-linked (GlcNAc...) asparagine glycosylation sites follow: Asn-322, Asn-332, and Asn-356. The segment at 375–377 (DVS) is CLE peptide binding. The N-linked (GlcNAc...) asparagine glycan is linked to Asn-378. A disulfide bridge links Cys-390 with Cys-416. The CLE peptide binding stretch occupies residues 421–423 (RFR). 5 N-linked (GlcNAc...) asparagine glycosylation sites follow: Asn-430, Asn-442, Asn-471, Asn-525, and Asn-542. Cys-511 and Cys-535 are disulfide-bonded. N-linked (GlcNAc...) asparagine glycosylation occurs at Asn-590. A disulfide bond links Cys-620 and Cys-628. Residues 653–673 (AGAIVWILAAAIGVGFFVLVA) traverse the membrane as a helical segment. Over 674 to 1041 (ATRCFQKSYG…HDVKCQRIGV (368 aa)) the chain is Cytoplasmic. Residue Thr-710 is modified to Phosphothreonine. A Protein kinase domain is found at 719–1001 (SKTDNILGMG…DVLLILQEAK (283 aa)). Residues 725-733 (LGMGSTGTV) and Lys-747 each bind ATP. Tyr-798 and Tyr-839 each carry phosphotyrosine. Asp-852 acts as the Proton acceptor in catalysis. Position 884 is a phosphoserine (Ser-884). Tyr-892 and Tyr-899 each carry phosphotyrosine. Thr-900 is subject to Phosphothreonine.

The protein belongs to the protein kinase superfamily. Ser/Thr protein kinase family. As to quaternary structure, interacts specifically with the mature peptides CLE41p and CLE44p, especially in the presence of SERK2. Interacts with LURE1.2. As to expression, widely expressed along the vascular strands. In roots and hypocotyls, confined to procambial cells.

Its subcellular location is the cell membrane. The enzyme catalyses L-seryl-[protein] + ATP = O-phospho-L-seryl-[protein] + ADP + H(+). It carries out the reaction L-threonyl-[protein] + ATP = O-phospho-L-threonyl-[protein] + ADP + H(+). In terms of biological role, acts with CLE41p and CLE44p peptides as a ligand-receptor pair in a signal transduction pathway involved in the regulation of procambium maintenance and polarity during vascular-tissue development. Mediates repression of tracheary element differentiation and the promotion of procambial cells formation and polar division adjacent to phloem cells in the veins. The chain is Leucine-rich repeat receptor-like protein kinase TDR from Arabidopsis thaliana (Mouse-ear cress).